The chain runs to 564 residues: O-fucosyltransferase 6 (564 aa).

Residues 17–37 (LLPFICAVSGALLILFALLSI) traverse the membrane as a helical; Signal-anchor for type II membrane protein segment. Residues N95 and N139 are each glycosylated (N-linked (GlcNAc...) asparagine). 277-279 (HLR) serves as a coordination point for substrate. N449 carries N-linked (GlcNAc...) asparagine glycosylation. Basic and acidic residues predominate over residues 501–512 (MDSRKFGKKEQK). Residues 501-542 (MDSRKFGKKEQKEDEDAELSSSETDYEEDQTDLQDRGLYNGT) form a disordered region. The segment covering 513–532 (EDEDAELSSSETDYEEDQTD) has biased composition (acidic residues). N-linked (GlcNAc...) asparagine glycosylation is present at N540.

Belongs to the glycosyltransferase GT106 family.

It is found in the membrane. It participates in glycan metabolism. This is O-fucosyltransferase 6 from Arabidopsis thaliana (Mouse-ear cress).